The following is a 151-amino-acid chain: 3-hydroxyacyl-[acyl-carrier-protein] dehydratase FabZ (151 aa).

His-54 is a catalytic residue.

This sequence belongs to the thioester dehydratase family. FabZ subfamily.

It is found in the cytoplasm. It catalyses the reaction a (3R)-hydroxyacyl-[ACP] = a (2E)-enoyl-[ACP] + H2O. Involved in unsaturated fatty acids biosynthesis. Catalyzes the dehydration of short chain beta-hydroxyacyl-ACPs and long chain saturated and unsaturated beta-hydroxyacyl-ACPs. This Erwinia tasmaniensis (strain DSM 17950 / CFBP 7177 / CIP 109463 / NCPPB 4357 / Et1/99) protein is 3-hydroxyacyl-[acyl-carrier-protein] dehydratase FabZ.